The primary structure comprises 415 residues: Gamma-glutamyl phosphate reductase (415 aa).

This sequence belongs to the gamma-glutamyl phosphate reductase family.

The protein localises to the cytoplasm. It carries out the reaction L-glutamate 5-semialdehyde + phosphate + NADP(+) = L-glutamyl 5-phosphate + NADPH + H(+). Its pathway is amino-acid biosynthesis; L-proline biosynthesis; L-glutamate 5-semialdehyde from L-glutamate: step 2/2. Its function is as follows. Catalyzes the NADPH-dependent reduction of L-glutamate 5-phosphate into L-glutamate 5-semialdehyde and phosphate. The product spontaneously undergoes cyclization to form 1-pyrroline-5-carboxylate. This Thermotoga petrophila (strain ATCC BAA-488 / DSM 13995 / JCM 10881 / RKU-1) protein is Gamma-glutamyl phosphate reductase.